The following is a 109-amino-acid chain: Spermidine export protein MdtI (109 aa).

A run of 4 helical transmembrane segments spans residues 6–26 (WIHAAWLAFAIVLEIIANVFL), 36–56 (WFGLLSIAAVLGAFSALSQAV), 64–84 (AYALWGGFGIAATLAAGWVLF), and 88–108 (LNRKGWIGLVLLLAGMVMIKL).

The protein belongs to the drug/metabolite transporter (DMT) superfamily. Small multidrug resistance (SMR) (TC 2.A.7.1) family. MdtI subfamily. In terms of assembly, forms a complex with MdtJ.

Its subcellular location is the cell inner membrane. In terms of biological role, catalyzes the excretion of spermidine. The chain is Spermidine export protein MdtI from Enterobacter sp. (strain 638).